Reading from the N-terminus, the 345-residue chain is Phosphoribosylformylglycinamidine cyclo-ligase (345 aa).

Belongs to the AIR synthase family.

It localises to the cytoplasm. The enzyme catalyses 2-formamido-N(1)-(5-O-phospho-beta-D-ribosyl)acetamidine + ATP = 5-amino-1-(5-phospho-beta-D-ribosyl)imidazole + ADP + phosphate + H(+). The protein operates within purine metabolism; IMP biosynthesis via de novo pathway; 5-amino-1-(5-phospho-D-ribosyl)imidazole from N(2)-formyl-N(1)-(5-phospho-D-ribosyl)glycinamide: step 2/2. This chain is Phosphoribosylformylglycinamidine cyclo-ligase, found in Escherichia coli O7:K1 (strain IAI39 / ExPEC).